The following is a 549-amino-acid chain: Lipase 5 (549 aa).

Positions 1–15 (MKLALALSLIASVAA) are cleaved as a signal peptide. Cysteine 75 and cysteine 112 are joined by a disulfide. The Acyl-ester intermediate role is filled by serine 224. A disulfide bond links cysteine 283 and cysteine 292. An N-linked (GlcNAc...) asparagine glycan is attached at asparagine 329. Catalysis depends on glutamate 356, which acts as the Charge relay system. An N-linked (GlcNAc...) asparagine glycan is attached at asparagine 366. The active-site Charge relay system is histidine 464.

Belongs to the type-B carboxylesterase/lipase family.

It catalyses the reaction a triacylglycerol + H2O = a diacylglycerol + a fatty acid + H(+). This is Lipase 5 (LIP5) from Diutina rugosa (Yeast).